Reading from the N-terminus, the 844-residue chain is Probable serine/threonine-protein kinase DDB_G0267566 (844 aa).

ANK repeat units follow at residues 335–367 and 371–400; these read KGDT…NANI and KHKV…KPFL. The region spanning 508–773 is the Protein kinase domain; the sequence is SELGKLIGKG…FEVFQKLKKV (266 aa). ATP contacts are provided by residues 514 to 522 and lysine 539; that span reads IGKGANGKV. Aspartate 634 (proton acceptor) is an active-site residue.

It belongs to the protein kinase superfamily. Ser/Thr protein kinase family.

The catalysed reaction is L-seryl-[protein] + ATP = O-phospho-L-seryl-[protein] + ADP + H(+). It catalyses the reaction L-threonyl-[protein] + ATP = O-phospho-L-threonyl-[protein] + ADP + H(+). This Dictyostelium discoideum (Social amoeba) protein is Probable serine/threonine-protein kinase DDB_G0267566.